Consider the following 421-residue polypeptide: Probable cysteine desulfurase (421 aa).

Position 242 is an N6-(pyridoxal phosphate)lysine (K242).

It belongs to the class-V pyridoxal-phosphate-dependent aminotransferase family. Csd subfamily. Pyridoxal 5'-phosphate serves as cofactor.

The catalysed reaction is (sulfur carrier)-H + L-cysteine = (sulfur carrier)-SH + L-alanine. Functionally, catalyzes the removal of elemental sulfur and selenium atoms from L-cysteine, L-cystine, L-selenocysteine, and L-selenocystine to produce L-alanine. This is Probable cysteine desulfurase (csd) from Pasteurella multocida (strain Pm70).